We begin with the raw amino-acid sequence, 341 residues long: Aromatic amino acid aminotransferase (341 aa).

Residue K213 is modified to N6-(pyridoxal phosphate)lysine.

Belongs to the class-II pyridoxal-phosphate-dependent aminotransferase family. Homodimer. Pyridoxal 5'-phosphate is required as a cofactor.

It catalyses the reaction an aromatic L-alpha-amino acid + 2-oxoglutarate = an aromatic oxo-acid + L-glutamate. Functionally, aminotransferase that catalyzes the conversion of aromatic amino acids and 2-oxoglutarate into corresponding aromatic oxo acids and L-glutamate. May catalyze the transamination reaction in phenylalanine biosynthesis. In Corynebacterium glutamicum (strain ATCC 13032 / DSM 20300 / JCM 1318 / BCRC 11384 / CCUG 27702 / LMG 3730 / NBRC 12168 / NCIMB 10025 / NRRL B-2784 / 534), this protein is Aromatic amino acid aminotransferase.